Consider the following 932-residue polypeptide: Alanine--tRNA ligase, mitochondrial (932 aa).

The tract at residues 458 to 480 (SRLTWNTSSSSSDQTTQQTTQLP) is disordered. Residues 464–478 (TSSSSSDQTTQQTTQ) show a composition bias toward low complexity. Residues His610, His614, Cys713, and His717 each contribute to the Zn(2+) site.

This sequence belongs to the class-II aminoacyl-tRNA synthetase family. Monomer. Zn(2+) is required as a cofactor.

Its subcellular location is the mitochondrion. The catalysed reaction is tRNA(Ala) + L-alanine + ATP = L-alanyl-tRNA(Ala) + AMP + diphosphate. Functionally, catalyzes the attachment of alanine to tRNA(Ala) in a two-step reaction: alanine is first activated by ATP to form Ala-AMP and then transferred to the acceptor end of tRNA(Ala). Also edits incorrectly charged tRNA(Ala) via its editing domain. The chain is Alanine--tRNA ligase, mitochondrial (malaS) from Dictyostelium discoideum (Social amoeba).